A 204-amino-acid chain; its full sequence is Urease accessory protein UreG (204 aa).

11-18 (GPVGAGKT) lines the GTP pocket.

It belongs to the SIMIBI class G3E GTPase family. UreG subfamily. As to quaternary structure, homodimer. UreD, UreF and UreG form a complex that acts as a GTP-hydrolysis-dependent molecular chaperone, activating the urease apoprotein by helping to assemble the nickel containing metallocenter of UreC. The UreE protein probably delivers the nickel.

It localises to the cytoplasm. Its function is as follows. Facilitates the functional incorporation of the urease nickel metallocenter. This process requires GTP hydrolysis, probably effectuated by UreG. The chain is Urease accessory protein UreG from Staphylococcus aureus (strain MSSA476).